We begin with the raw amino-acid sequence, 394 residues long: DNA replication and repair protein RecF (394 aa).

30–37 (GPNAAGKT) provides a ligand contact to ATP.

This sequence belongs to the RecF family.

It is found in the cytoplasm. In terms of biological role, the RecF protein is involved in DNA metabolism; it is required for DNA replication and normal SOS inducibility. RecF binds preferentially to single-stranded, linear DNA. It also seems to bind ATP. The polypeptide is DNA replication and repair protein RecF (Roseiflexus castenholzii (strain DSM 13941 / HLO8)).